The primary structure comprises 240 residues: Uridylate kinase (240 aa).

Residue 13 to 16 (KFSG) participates in ATP binding. G55 contributes to the UMP binding site. ATP is bound by residues G56 and R60. Residues D76 and 137-144 (TGNPFFTT) contribute to the UMP site. T164, Y170, and D173 together coordinate ATP.

Belongs to the UMP kinase family. In terms of assembly, homohexamer.

The protein resides in the cytoplasm. The enzyme catalyses UMP + ATP = UDP + ADP. It functions in the pathway pyrimidine metabolism; CTP biosynthesis via de novo pathway; UDP from UMP (UMPK route): step 1/1. Inhibited by UTP. Catalyzes the reversible phosphorylation of UMP to UDP. This chain is Uridylate kinase, found in Helicobacter acinonychis (strain Sheeba).